A 538-amino-acid polypeptide reads, in one-letter code: Zinc finger protein 155 (538 aa).

The region spanning 8 to 78 (VTFKDVAVVF…GTATQREGNS (71 aa)) is the KRAB domain. C2H2-type zinc fingers lie at residues 176-198 (YTCDECGKSICYISALHVHQRVH), 204-226 (FMCDVCGKEFSQSSHLQTHQRVH), 232-254 (FKCEQCGKGFSRRSALNVHRKLH), 260-282 (YICEACGKAFIHDSQLKEHKRIH), 288-310 (FKCDICGKTFYFRSRLKSHSMVH), 316-338 (FRCDTCDKSFHQRSALNRHCMVH), 344-366 (YRCEQCGKGFIGRLDFYKHQVVH), 372-394 (YNCKECGKSFRWSSCLLNHQRVH), 400-422 (FKCEECGKGFYTNSQLSSHQRSH), 428-450 (YKCEECGKGYVTKFNLDLHQRVH), and 456-478 (YNCKECGKNFSRASSILNHKRLH). Residues 484–506 (FKCEDCGKRLVHRTYRKDQPRDY) form a C2H2-type 12; degenerate zinc finger.

It belongs to the krueppel C2H2-type zinc-finger protein family.

It is found in the nucleus. In terms of biological role, may be involved in transcriptional regulation. This chain is Zinc finger protein 155 (ZNF155), found in Homo sapiens (Human).